Here is a 383-residue protein sequence, read N- to C-terminus: S-adenosylmethionine synthase (383 aa).

Histidine 15 provides a ligand contact to ATP. Aspartate 17 is a Mg(2+) binding site. Position 43 (glutamate 43) interacts with K(+). Residues glutamate 56 and glutamine 99 each coordinate L-methionine. Residues 99–109 are flexible loop; it reads QSPDINQGVDR. Residues 164-166, 230-231, aspartate 239, 245-246, alanine 262, and lysine 266 contribute to the ATP site; these read DAK, RF, and RK. Aspartate 239 lines the L-methionine pocket. Lysine 270 lines the L-methionine pocket.

The protein belongs to the AdoMet synthase family. In terms of assembly, homotetramer; dimer of dimers. It depends on Mg(2+) as a cofactor. K(+) is required as a cofactor.

It is found in the cytoplasm. It catalyses the reaction L-methionine + ATP + H2O = S-adenosyl-L-methionine + phosphate + diphosphate. The protein operates within amino-acid biosynthesis; S-adenosyl-L-methionine biosynthesis; S-adenosyl-L-methionine from L-methionine: step 1/1. Catalyzes the formation of S-adenosylmethionine (AdoMet) from methionine and ATP. The overall synthetic reaction is composed of two sequential steps, AdoMet formation and the subsequent tripolyphosphate hydrolysis which occurs prior to release of AdoMet from the enzyme. In Shewanella baltica (strain OS223), this protein is S-adenosylmethionine synthase.